The primary structure comprises 255 residues: MEFSDELLASLRDARHIAVFTGAGVSAESGIPTFRDALTGFWENYDASTLASPEGFAADPALVWGWYEWRRTRVLRAEPNPAHYAIAALAADCPRLTLITQNVDDLHERAGSADPIRLHGSLHHPRCSACEAPYRLPPGIPDEPEGGRRVDPPRCARCGAPVRPGVVWLGENLPQAAWDAARQAAEDCDLMFSIGTSALVWPAAQLPALVARRGATVVQVNPAETALDGHAGYNLRGAAGKVMPLLLQALRRSRP.

The 253-residue stretch at 1–253 folds into the Deacetylase sirtuin-type domain; the sequence is MEFSDELLAS…PLLLQALRRS (253 aa). 22-42 serves as a coordination point for NAD(+); it reads GAGVSAESGIPTFRDALTGFW. Substrate contacts are provided by Tyr67 and Arg70. 101–104 serves as a coordination point for NAD(+); the sequence is QNVD. The active-site Proton acceptor is His119. Residues Cys127, Cys130, Cys155, and Cys158 each contribute to the Zn(2+) site. Residues 195 to 197, 221 to 223, and Ala239 each bind NAD(+); these read GTS and NPA.

Belongs to the sirtuin family. Class III subfamily. Zn(2+) is required as a cofactor.

It localises to the cytoplasm. It carries out the reaction N(6)-acetyl-L-lysyl-[protein] + NAD(+) + H2O = 2''-O-acetyl-ADP-D-ribose + nicotinamide + L-lysyl-[protein]. The catalysed reaction is N(6)-succinyl-L-lysyl-[protein] + NAD(+) + H2O = 2''-O-succinyl-ADP-D-ribose + nicotinamide + L-lysyl-[protein]. Its function is as follows. NAD-dependent lysine deacetylase and desuccinylase that specifically removes acetyl and succinyl groups on target proteins. Modulates the activities of several proteins which are inactive in their acylated form. This chain is NAD-dependent protein deacylase, found in Methylococcus capsulatus (strain ATCC 33009 / NCIMB 11132 / Bath).